Here is a 548-residue protein sequence, read N- to C-terminus: Hydroxylamine reductase (548 aa).

4 residues coordinate [4Fe-4S] cluster: Cys-3, Cys-6, Cys-15, and Cys-21. Hybrid [4Fe-2O-2S] cluster-binding residues include His-240, Glu-264, Cys-308, Cys-402, Cys-430, Cys-455, Glu-490, and Lys-492. Cys-402 is subject to Cysteine persulfide.

The protein belongs to the HCP family. [4Fe-4S] cluster serves as cofactor. Hybrid [4Fe-2O-2S] cluster is required as a cofactor.

The protein localises to the cytoplasm. The enzyme catalyses A + NH4(+) + H2O = hydroxylamine + AH2 + H(+). In terms of biological role, catalyzes the reduction of hydroxylamine to form NH(3) and H(2)O. In Parabacteroides distasonis (strain ATCC 8503 / DSM 20701 / CIP 104284 / JCM 5825 / NCTC 11152), this protein is Hydroxylamine reductase.